Reading from the N-terminus, the 78-residue chain is Esculentin-2PLa (78 aa).

The N-terminal stretch at 1–22 (MFTTKKSMLLLFFLGTISLSLC) is a signal peptide. Residues 23–39 (EEERGADEEEGDGEKLM) constitute a propeptide that is removed on maturation. A disulfide bridge links Cys72 with Cys78.

As to expression, expressed by the skin glands.

The protein resides in the secreted. Antimicrobial activity against the Gram-negative bacterium E.coli, the Gram-positive bacterium S.aureus and the yeast C.albicans. The protein is Esculentin-2PLa of Lithobates palustris (Pickerel frog).